The following is a 119-amino-acid chain: MKRIAFVFSTVPHGTAAGREGLDALLATSALTDELAVFFIADGVFQLLPGQKPDAVLARDYIATFKLLDLYDIEQCWVCAASLRERGLDPQTPFVVEATPLEADALRRELANYDVILRF.

It belongs to the DsrF/TusC family. Heterohexamer, formed by a dimer of trimers. The hexameric TusBCD complex contains 2 copies each of TusB, TusC and TusD. The TusBCD complex interacts with TusE.

It localises to the cytoplasm. Functionally, part of a sulfur-relay system required for 2-thiolation of 5-methylaminomethyl-2-thiouridine (mnm(5)s(2)U) at tRNA wobble positions. The polypeptide is Protein TusC (Escherichia coli O157:H7).